A 184-amino-acid polypeptide reads, in one-letter code: MTQENQNPPPEQEDVAADPQVNEAAASEPAAVKTPEQEIADLNQQIGELQDNFLRAKAEGENIRRRAVEDIAKAHKFAIESFAEHLVPVTDSLYAALSTDAGDAKAFKEGLEITLKQLLSAFEKGRMTEINPAVGDKFDPHHHQAIASVPSEQDPNTVVSVLQRGYTVADRVLRPALVTVSAPK.

The tract at residues Met-1–Pro-35 is disordered.

This sequence belongs to the GrpE family. Homodimer.

The protein localises to the cytoplasm. Functionally, participates actively in the response to hyperosmotic and heat shock by preventing the aggregation of stress-denatured proteins, in association with DnaK and GrpE. It is the nucleotide exchange factor for DnaK and may function as a thermosensor. Unfolded proteins bind initially to DnaJ; upon interaction with the DnaJ-bound protein, DnaK hydrolyzes its bound ATP, resulting in the formation of a stable complex. GrpE releases ADP from DnaK; ATP binding to DnaK triggers the release of the substrate protein, thus completing the reaction cycle. Several rounds of ATP-dependent interactions between DnaJ, DnaK and GrpE are required for fully efficient folding. This chain is Protein GrpE, found in Polynucleobacter asymbioticus (strain DSM 18221 / CIP 109841 / QLW-P1DMWA-1) (Polynucleobacter necessarius subsp. asymbioticus).